A 475-amino-acid polypeptide reads, in one-letter code: MSPQTETKAGVGFKAGVKDYRLTYYTPDYETKDTDILAAFRMTPQPGVPAEEAGNAVAAESSTGTWTTVWTDGLTNLDRYKGRCYDIDPVPGEENQYIAYVAYPLDLFEEGSVTNMFTSIVGNVFGFKALRALRLEDLRIPPAYTKTFQGPPHGIQVERDKLNKYGRPLLGCTIKPKLGLSAKNYGRAVYECLRGGLDFTKDDENVNSQPFMRWRDRFLFVAEAIYKSQAETGEIKGHYLNATAGTCEEMLKRAACARELGVPIVMHDYLTGGFTANTSLAFYCRDNGLLLHIHRAMHAVIDRQKNHGIHFRVLAKALRMSGGDHIHAGTVVGKLEGDRQVTLGFVDLLRDDYIEKDRSRGIYFTQDWVSLPGVFPVASGGIHVWHMPALTEIFGDDSVLQFGGGTLGHPWGNAPGAVANRVSLEACVQARNEGRDLAREGNEIIREACKWSPELSAACEIWKEIKFEFDIIDTL.

Residues 1-2 (MS) constitute a propeptide that is removed on maturation. An N-acetylproline modification is found at P3. K14 is subject to N6,N6,N6-trimethyllysine. Substrate-binding residues include N123 and T173. The Proton acceptor role is filled by K175. K177 is a binding site for substrate. Positions 201, 203, and 204 each coordinate Mg(2+). K201 carries the N6-carboxylysine modification. Residue H294 is the Proton acceptor of the active site. Residues R295, H327, and S379 each contribute to the substrate site.

It belongs to the RuBisCO large chain family. Type I subfamily. In terms of assembly, heterohexadecamer of 8 large chains and 8 small chains; disulfide-linked. The disulfide link is formed within the large subunit homodimers. Mg(2+) serves as cofactor. The disulfide bond which can form in the large chain dimeric partners within the hexadecamer appears to be associated with oxidative stress and protein turnover.

Its subcellular location is the plastid. It is found in the chloroplast. The catalysed reaction is 2 (2R)-3-phosphoglycerate + 2 H(+) = D-ribulose 1,5-bisphosphate + CO2 + H2O. The enzyme catalyses D-ribulose 1,5-bisphosphate + O2 = 2-phosphoglycolate + (2R)-3-phosphoglycerate + 2 H(+). In terms of biological role, ruBisCO catalyzes two reactions: the carboxylation of D-ribulose 1,5-bisphosphate, the primary event in carbon dioxide fixation, as well as the oxidative fragmentation of the pentose substrate in the photorespiration process. Both reactions occur simultaneously and in competition at the same active site. The protein is Ribulose bisphosphate carboxylase large chain (rbcL) of Marchantia polymorpha (Common liverwort).